Here is a 457-residue protein sequence, read N- to C-terminus: Siroheme synthase (457 aa).

The precorrin-2 dehydrogenase /sirohydrochlorin ferrochelatase stretch occupies residues 1–204 (MEIFPISLKL…DNLDIANQMM (204 aa)). Residues 22–23 (HI) and 43–44 (PD) contribute to the NAD(+) site. Residue S129 is modified to Phosphoserine. Residues 216–457 (GEVYLVGAGP…VSLREQLQWL (242 aa)) form a uroporphyrinogen-III C-methyltransferase region. P225 contributes to the S-adenosyl-L-methionine binding site. D248 (proton acceptor) is an active-site residue. Catalysis depends on K270, which acts as the Proton donor. Residues 301–303 (GGD), I306, 331–332 (TA), M383, and G412 each bind S-adenosyl-L-methionine.

In the N-terminal section; belongs to the precorrin-2 dehydrogenase / sirohydrochlorin ferrochelatase family. It in the C-terminal section; belongs to the precorrin methyltransferase family.

The enzyme catalyses uroporphyrinogen III + 2 S-adenosyl-L-methionine = precorrin-2 + 2 S-adenosyl-L-homocysteine + H(+). It catalyses the reaction precorrin-2 + NAD(+) = sirohydrochlorin + NADH + 2 H(+). It carries out the reaction siroheme + 2 H(+) = sirohydrochlorin + Fe(2+). It functions in the pathway cofactor biosynthesis; adenosylcobalamin biosynthesis; precorrin-2 from uroporphyrinogen III: step 1/1. It participates in cofactor biosynthesis; adenosylcobalamin biosynthesis; sirohydrochlorin from precorrin-2: step 1/1. The protein operates within porphyrin-containing compound metabolism; siroheme biosynthesis; precorrin-2 from uroporphyrinogen III: step 1/1. Its pathway is porphyrin-containing compound metabolism; siroheme biosynthesis; siroheme from sirohydrochlorin: step 1/1. It functions in the pathway porphyrin-containing compound metabolism; siroheme biosynthesis; sirohydrochlorin from precorrin-2: step 1/1. Multifunctional enzyme that catalyzes the SAM-dependent methylations of uroporphyrinogen III at position C-2 and C-7 to form precorrin-2 via precorrin-1. Then it catalyzes the NAD-dependent ring dehydrogenation of precorrin-2 to yield sirohydrochlorin. Finally, it catalyzes the ferrochelation of sirohydrochlorin to yield siroheme. The protein is Siroheme synthase of Acinetobacter baylyi (strain ATCC 33305 / BD413 / ADP1).